The primary structure comprises 411 residues: CinA-like protein (411 aa).

This sequence belongs to the CinA family.

The chain is CinA-like protein from Dictyoglomus turgidum (strain DSM 6724 / Z-1310).